Reading from the N-terminus, the 118-residue chain is Small ribosomal subunit protein uS13 (118 aa).

The interval 91–118 is disordered; sequence HRRGLPVRGQRTKTNARTRKGPRKPIKK.

The protein belongs to the universal ribosomal protein uS13 family. Part of the 30S ribosomal subunit. Forms a loose heterodimer with protein S19. Forms two bridges to the 50S subunit in the 70S ribosome.

Its function is as follows. Located at the top of the head of the 30S subunit, it contacts several helices of the 16S rRNA. In the 70S ribosome it contacts the 23S rRNA (bridge B1a) and protein L5 of the 50S subunit (bridge B1b), connecting the 2 subunits; these bridges are implicated in subunit movement. Contacts the tRNAs in the A and P-sites. In Hamiltonella defensa subsp. Acyrthosiphon pisum (strain 5AT), this protein is Small ribosomal subunit protein uS13.